Reading from the N-terminus, the 518-residue chain is Gypsy retrotransposon integrase-like protein 1 (518 aa).

The region spanning 135-293 (VVGNPWSVVT…PYFQMFNRNP (159 aa)) is the Integrase catalytic domain. The tract at residues 326 to 348 (NQTPAAGQMESSTSEELSKSKVA) is disordered. A Phosphoserine modification is found at S498.

This chain is Gypsy retrotransposon integrase-like protein 1 (GIN1), found in Rattus norvegicus (Rat).